The primary structure comprises 319 residues: Putative GPI-anchor transamidase (319 aa).

Residues 1–16 (MRHVLLIFCAIIATEA) form the signal peptide. Catalysis depends on residues H156 and C198. The N-linked (GlcNAc...) asparagine glycan is linked to N257.

The protein belongs to the peptidase C13 family.

The protein operates within glycolipid biosynthesis; glycosylphosphatidylinositol-anchor biosynthesis. Functionally, mediates GPI anchoring in the endoplasmic reticulum, by replacing a protein's C-terminal GPI attachment signal peptide with a pre-assembled GPI. During this transamidation reaction, the GPI transamidase forms a carbonyl intermediate with the substrate protein. The chain is Putative GPI-anchor transamidase from Caenorhabditis elegans.